Reading from the N-terminus, the 161-residue chain is Globin CTT-VIIB-3 (161 aa).

The first 16 residues, 1 to 16 (MKFFAVLALCIVGAIA), serve as a signal peptide directing secretion. The 144-residue stretch at 18–161 (PLTADEASLV…NTYAIVVPRL (144 aa)) folds into the Globin domain. Heme b-binding residues include histidine 76 and histidine 111.

Belongs to the globin family. Homodimer.

The chain is Globin CTT-VIIB-3 (CTT-7B3) from Chironomus thummi thummi (Midge).